A 141-amino-acid chain; its full sequence is Regulator of ribonuclease activity B (141 aa).

The span at 119 to 132 (DEDFDDEDDDEDYD) shows a compositional bias: acidic residues. The tract at residues 119–141 (DEDFDDEDDDEDYDKDGFPIERH) is disordered.

The protein belongs to the RraB family. As to quaternary structure, interacts with the C-terminal region of Rne.

It localises to the cytoplasm. Functionally, globally modulates RNA abundance by binding to RNase E (Rne) and regulating its endonucleolytic activity. Can modulate Rne action in a substrate-dependent manner by altering the composition of the degradosome. The protein is Regulator of ribonuclease activity B of Shewanella amazonensis (strain ATCC BAA-1098 / SB2B).